The chain runs to 135 residues: DNA-binding protein H-NS homolog (135 aa).

A DNA-binding region spans residues 112 to 117; sequence QGRTPS.

Belongs to the histone-like protein H-NS family. In terms of assembly, homodimer that oligomerizes on DNA into higher-order complexes that form bridges between disparate regions of DNA compacting it.

The protein localises to the cytoplasm. The protein resides in the nucleoid. In terms of biological role, a DNA-binding protein implicated in transcriptional repression and chromosome organization and compaction. Binds nucleation sites in AT-rich DNA and bridges them, forming higher-order nucleoprotein complexes and condensing the chromosome. A subset of genes are repressed by H-NS in association with other proteins. This Buchnera aphidicola subsp. Acyrthosiphon pisum (strain APS) (Acyrthosiphon pisum symbiotic bacterium) protein is DNA-binding protein H-NS homolog (hns).